A 280-amino-acid chain; its full sequence is Lipase chaperone (280 aa).

A helical membrane pass occupies residues 5–22 (ALTIITIALGSLGAVYFL).

Belongs to the lipase chaperone family.

It is found in the cell inner membrane. May be involved in the folding of the extracellular lipase during its passage through the periplasm. The polypeptide is Lipase chaperone (lifO) (Vibrio vulnificus (strain CMCP6)).